Consider the following 190-residue polypeptide: dCTP deaminase, dUMP-forming (190 aa).

Residues Lys-101–Arg-106, Asp-119, Thr-127–Glu-129, Gln-148, Tyr-162, and Gln-174 contribute to the dCTP site. The Proton donor/acceptor role is filled by Glu-129. The segment at Gly-163–Thr-190 is disordered. Over residues Tyr-171 to Thr-190 the composition is skewed to polar residues.

The protein belongs to the dCTP deaminase family. As to quaternary structure, homotrimer.

It carries out the reaction dCTP + 2 H2O = dUMP + NH4(+) + diphosphate. Its pathway is pyrimidine metabolism; dUMP biosynthesis; dUMP from dCTP: step 1/1. Bifunctional enzyme that catalyzes both the deamination of dCTP to dUTP and the hydrolysis of dUTP to dUMP without releasing the toxic dUTP intermediate. The protein is dCTP deaminase, dUMP-forming of Mycolicibacterium paratuberculosis (strain ATCC BAA-968 / K-10) (Mycobacterium paratuberculosis).